A 70-amino-acid polypeptide reads, in one-letter code: uncharacterized protein (70 aa).

The helical transmembrane segment at 14–34 (CLVVWFACVYSLLILVVLLLI) threads the bilayer.

Its subcellular location is the virion membrane. This is an uncharacterized protein from Homo sapiens (Human).